Here is an 89-residue protein sequence, read N- to C-terminus: Large ribosomal subunit protein bL27 (89 aa).

Residues 1-23 (MAHKKAGGSSRNGRDSAGKRLGI) form a disordered region.

It belongs to the bacterial ribosomal protein bL27 family.

The sequence is that of Large ribosomal subunit protein bL27 from Rhodopseudomonas palustris (strain BisA53).